Here is a 461-residue protein sequence, read N- to C-terminus: MSIPHINKLSQDGRVRFSNWAKTFSAISLGLRCPKTEEQLREILVDANSNGKKIRVVGAGHSPSDIVCTSGYLLSLDKMNKVVSFDPDSLSITVQAGIRFYQVQEILQNLGYSLPIVGSISETSVSGIMSTCTHGSSLQHQVLPHYIKSMRIMLADGSIVTCSRELQKDMFAAAQVSLGALGVIVDITISVVPAFDLVATEDVTTVTDLFQDWKNNLIWESAEFVRVHVFPYANRAVVWRANKVEPNTVPHTPKPSLFRLKLDSFVYQCLLFVGKCVNRVTPYLERFWFKCHYGSKLGTALQVAGPGFDVLQMFCYFSQHVSEWGIPLESAPDALEKLINYTVDDAGKIGAYTHWPIEVRVCAPTPEDECWLSTDCKVPTCYIEAIMYRPFSTSINYKPYFKALEDIANQYNGKPHWAKEYSLTKEQLLERYPNLSKWLSLRKLLDPKGVFWNDYLQRHLG.

One can recognise an FAD-binding PCMH-type domain in the interval 24-194 (FSAISLGLRC…VDITISVVPA (171 aa)). His61 is subject to Pros-8alpha-FAD histidine.

This sequence belongs to the oxygen-dependent FAD-linked oxidoreductase family. FAD serves as cofactor.

The protein localises to the mitochondrion membrane. It carries out the reaction D-arabinono-1,4-lactone + O2 = dehydro-D-arabinono-1,4-lactone + H2O2 + H(+). It participates in cofactor biosynthesis; D-erythroascorbate biosynthesis; dehydro-D-arabinono-1,4-lactone from D-arabinose: step 2/2. This is D-arabinono-1,4-lactone oxidase (alo1) from Schizosaccharomyces pombe (strain 972 / ATCC 24843) (Fission yeast).